Here is a 350-residue protein sequence, read N- to C-terminus: Biotin synthase 1 (350 aa).

The 226-residue stretch at 71-296 (EEVEVEGIIS…KTILRFAGGR (226 aa)) folds into the Radical SAM core domain. [4Fe-4S] cluster-binding residues include C86, C90, and C93. Residues C129, C221, and R291 each contribute to the [2Fe-2S] cluster site.

It belongs to the radical SAM superfamily. Biotin synthase family. Homodimer. Requires [4Fe-4S] cluster as cofactor. The cofactor is [2Fe-2S] cluster.

It carries out the reaction (4R,5S)-dethiobiotin + (sulfur carrier)-SH + 2 reduced [2Fe-2S]-[ferredoxin] + 2 S-adenosyl-L-methionine = (sulfur carrier)-H + biotin + 2 5'-deoxyadenosine + 2 L-methionine + 2 oxidized [2Fe-2S]-[ferredoxin]. It participates in cofactor biosynthesis; biotin biosynthesis; biotin from 7,8-diaminononanoate: step 2/2. Functionally, catalyzes the conversion of dethiobiotin (DTB) to biotin by the insertion of a sulfur atom into dethiobiotin via a radical-based mechanism. This chain is Biotin synthase 1, found in Corynebacterium diphtheriae (strain ATCC 700971 / NCTC 13129 / Biotype gravis).